The following is a 648-amino-acid chain: Biosynthetic arginine decarboxylase (648 aa).

Lysine 109 is modified (N6-(pyridoxal phosphate)lysine). Position 291–301 (leucine 291–tyrosine 301) interacts with substrate.

The protein belongs to the Orn/Lys/Arg decarboxylase class-II family. SpeA subfamily. Mg(2+) is required as a cofactor. It depends on pyridoxal 5'-phosphate as a cofactor.

The catalysed reaction is L-arginine + H(+) = agmatine + CO2. It participates in amine and polyamine biosynthesis; agmatine biosynthesis; agmatine from L-arginine: step 1/1. In terms of biological role, catalyzes the biosynthesis of agmatine from arginine. In Prochlorococcus marinus (strain MIT 9303), this protein is Biosynthetic arginine decarboxylase.